Here is a 403-residue protein sequence, read N- to C-terminus: Creatinase (403 aa).

The active site involves His-232.

This sequence belongs to the peptidase M24 family. Creatinase subfamily. As to quaternary structure, homodimer.

The enzyme catalyses creatine + H2O = sarcosine + urea. This Flavobacterium sp. (strain U-188) protein is Creatinase.